We begin with the raw amino-acid sequence, 283 residues long: Pantothenate synthetase (283 aa).

34-41 (MGALHDGH) contacts ATP. His41 functions as the Proton donor in the catalytic mechanism. A (R)-pantoate-binding site is contributed by Gln65. Gln65 contributes to the beta-alanine binding site. 152–155 (GQKD) provides a ligand contact to ATP. Gln158 provides a ligand contact to (R)-pantoate. Residues Val181 and 189–192 (MSSR) contribute to the ATP site.

This sequence belongs to the pantothenate synthetase family. Homodimer.

It is found in the cytoplasm. The enzyme catalyses (R)-pantoate + beta-alanine + ATP = (R)-pantothenate + AMP + diphosphate + H(+). It functions in the pathway cofactor biosynthesis; (R)-pantothenate biosynthesis; (R)-pantothenate from (R)-pantoate and beta-alanine: step 1/1. Its function is as follows. Catalyzes the condensation of pantoate with beta-alanine in an ATP-dependent reaction via a pantoyl-adenylate intermediate. In Nitrobacter hamburgensis (strain DSM 10229 / NCIMB 13809 / X14), this protein is Pantothenate synthetase.